The primary structure comprises 305 residues: Putative lipid kinase SAS0691 (305 aa).

A DAGKc domain is found at 3–139 (NKYTHGVLFY…YDVIKINNQY (137 aa)). ATP contacts are provided by residues Ser-44, 74–80 (GDGTVNE), and Thr-101. The Mg(2+) site is built by Ser-220, Asp-223, and Glu-225. Residue Glu-281 is the Proton acceptor of the active site.

The protein belongs to the diacylglycerol/lipid kinase family. Mg(2+) serves as cofactor.

Functionally, may catalyze the ATP-dependent phosphorylation of lipids other than diacylglycerol (DAG). This Staphylococcus aureus (strain MSSA476) protein is Putative lipid kinase SAS0691.